Consider the following 289-residue polypeptide: Membrane protein insertase YidC (289 aa).

Positions 1-19 are cleaved as a signal peptide; sequence MKKKALLPLLLGIMVFLAG. Cys-20 carries N-palmitoyl cysteine lipidation. Cys-20 is lipidated: S-diacylglycerol cysteine. 5 helical membrane-spanning segments follow: residues 55–75, 133–153, 177–197, 210–230, and 231–251; these read YGLAIIVLVLAIRIIVLPFML, MLGCLPMLIQMPIIMGLFFVL, IWITVIAGVLYFLQAYVSTFS, MIISPIMIIWVSLSSAAALGL, and YWSVSAAFLIVQTYIANAYYS. Residues 268–289 are disordered; sequence EHGGSGNSKGAKVVSKKNKKKK.

It belongs to the OXA1/ALB3/YidC family. Type 2 subfamily.

The protein resides in the cell membrane. Its function is as follows. Required for the insertion and/or proper folding and/or complex formation of integral membrane proteins into the membrane. Involved in integration of membrane proteins that insert both dependently and independently of the Sec translocase complex, as well as at least some lipoproteins. The chain is Membrane protein insertase YidC from Staphylococcus carnosus (strain TM300).